Here is a 62-residue protein sequence, read N- to C-terminus: UPF0337 protein gsr0040 (62 aa).

Composition is skewed to basic and acidic residues over residues 1–15 (MGID…KDVQ) and 27–62 (DDPK…IDNV). Positions 1-62 (MGIDKRAEAT…DQAHRTIDNV (62 aa)) are disordered.

The protein belongs to the UPF0337 (CsbD) family.

In Gloeobacter violaceus (strain ATCC 29082 / PCC 7421), this protein is UPF0337 protein gsr0040.